The following is a 66-amino-acid chain: Large ribosomal subunit protein bL33c (66 aa).

Belongs to the bacterial ribosomal protein bL33 family.

It localises to the plastid. This Epifagus virginiana (Beechdrops) protein is Large ribosomal subunit protein bL33c (rpl33).